A 474-amino-acid polypeptide reads, in one-letter code: tRNA modification GTPase MnmE (474 aa).

(6S)-5-formyl-5,6,7,8-tetrahydrofolate is bound by residues Arg28, Glu92, and Arg131. Residues 227 to 395 (GIPVAIVGTT…LKGELTQIME (169 aa)) enclose the TrmE-type G domain. Asn237 is a K(+) binding site. GTP-binding positions include 237–242 (NVGKST), 256–262 (SDIHGTT), 281–284 (DTAG), and 376–378 (SAR). Mg(2+) is bound at residue Ser241. K(+) contacts are provided by Ser256, Ile258, and Thr261. Residue Thr262 participates in Mg(2+) binding. Lys474 is a binding site for (6S)-5-formyl-5,6,7,8-tetrahydrofolate.

It belongs to the TRAFAC class TrmE-Era-EngA-EngB-Septin-like GTPase superfamily. TrmE GTPase family. In terms of assembly, homodimer. Heterotetramer of two MnmE and two MnmG subunits. K(+) serves as cofactor.

It localises to the cytoplasm. Functionally, exhibits a very high intrinsic GTPase hydrolysis rate. Involved in the addition of a carboxymethylaminomethyl (cmnm) group at the wobble position (U34) of certain tRNAs, forming tRNA-cmnm(5)s(2)U34. In Porphyromonas gingivalis (strain ATCC BAA-308 / W83), this protein is tRNA modification GTPase MnmE.